The sequence spans 163 residues: HTH-type transcriptional regulator IscR (163 aa).

The HTH rrf2-type domain maps to 2–131 (RLTSKGRYAV…NNITLGELVN (130 aa)). The H-T-H motif DNA-binding region spans 28 to 51 (LADISERQGISLSYLEQLFSRLRK). Residues Cys-92, Cys-98, and Cys-104 each contribute to the [2Fe-2S] cluster site.

[2Fe-2S] cluster serves as cofactor.

Functionally, regulates the transcription of several operons and genes involved in the biogenesis of Fe-S clusters and Fe-S-containing proteins. This chain is HTH-type transcriptional regulator IscR, found in Klebsiella pneumoniae (strain 342).